The chain runs to 406 residues: Argininosuccinate synthase (406 aa).

ATP contacts are provided by residues alanine 12 to serine 20 and alanine 40. Positions 92 and 97 each coordinate L-citrulline. Glycine 122 provides a ligand contact to ATP. L-aspartate contacts are provided by threonine 124, asparagine 128, and aspartate 129. Asparagine 128 contributes to the L-citrulline binding site. L-citrulline-binding residues include arginine 132, serine 181, serine 190, glutamate 266, and tyrosine 278.

It belongs to the argininosuccinate synthase family. Type 1 subfamily. As to quaternary structure, homotetramer.

It is found in the cytoplasm. It carries out the reaction L-citrulline + L-aspartate + ATP = 2-(N(omega)-L-arginino)succinate + AMP + diphosphate + H(+). Its pathway is amino-acid biosynthesis; L-arginine biosynthesis; L-arginine from L-ornithine and carbamoyl phosphate: step 2/3. This chain is Argininosuccinate synthase, found in Serratia proteamaculans (strain 568).